An 80-amino-acid chain; its full sequence is Putative DNA-directed RNA polymerase subunit omega (80 aa).

This sequence belongs to the RNA polymerase subunit omega family.

It localises to the plastid. The protein resides in the chloroplast. The enzyme catalyses RNA(n) + a ribonucleoside 5'-triphosphate = RNA(n+1) + diphosphate. May be involved in RNA polymerase activity. The chain is Putative DNA-directed RNA polymerase subunit omega from Gracilaria tenuistipitata var. liui (Red alga).